The sequence spans 507 residues: RNA-splicing ligase RtcB homolog (507 aa).

Positions 121, 124, 229, 261, and 355 each coordinate Mn(2+). GMP is bound at residue 228–232 (NHYAE). GMP is bound by residues 355-356 (HN), 404-407 (GGTM), Ser-411, 430-433 (HGAG), and Lys-506. His-430 serves as the catalytic GMP-histidine intermediate.

Belongs to the RtcB family. As to quaternary structure, catalytic component of the tRNA-splicing ligase complex. Mn(2+) serves as cofactor.

It carries out the reaction a 3'-end 3'-phospho-ribonucleotide-RNA + a 5'-end dephospho-ribonucleoside-RNA + GTP = a ribonucleotidyl-ribonucleotide-RNA + GMP + diphosphate. The catalysed reaction is a 3'-end 2',3'-cyclophospho-ribonucleotide-RNA + a 5'-end dephospho-ribonucleoside-RNA + GTP + H2O = a ribonucleotidyl-ribonucleotide-RNA + GMP + diphosphate + H(+). Its function is as follows. Catalytic subunit of the tRNA-splicing ligase complex that acts by directly joining spliced tRNA halves to mature-sized tRNAs by incorporating the precursor-derived splice junction phosphate into the mature tRNA as a canonical 3',5'-phosphodiester. May act as an RNA ligase with broad substrate specificity, and may function toward other RNAs. In Plasmodium yoelii yoelii, this protein is RNA-splicing ligase RtcB homolog.